A 64-amino-acid polypeptide reads, in one-letter code: Large ribosomal subunit protein uL29 (64 aa).

This sequence belongs to the universal ribosomal protein uL29 family.

This is Large ribosomal subunit protein uL29 from Solidesulfovibrio magneticus (strain ATCC 700980 / DSM 13731 / RS-1) (Desulfovibrio magneticus).